The following is a 325-amino-acid chain: Tartrate-resistant acid phosphatase type 5 (325 aa).

An N-terminal signal peptide occupies residues 1–21 (MDTWTLLLVLHTSLLLPWAEG). Residues Asn116 and Asn147 are each glycosylated (N-linked (GlcNAc...) asparagine).

As to quaternary structure, exists either as monomer or, after proteolytic processing, as a dimer of two chains linked by disulfide bond(s). Requires Fe cation as cofactor.

The protein localises to the lysosome. It carries out the reaction a phosphate monoester + H2O = an alcohol + phosphate. This chain is Tartrate-resistant acid phosphatase type 5 (ACP5), found in Oryctolagus cuniculus (Rabbit).